The following is a 53-amino-acid chain: uncharacterized protein (53 aa).

The interval 34–53 is disordered; the sequence is RKEKGKRHAAPLSLMGVHKR.

This is an uncharacterized protein from Treponema pallidum (strain Nichols).